A 226-amino-acid polypeptide reads, in one-letter code: dTTP/UTP pyrophosphatase (226 aa).

The active-site Proton acceptor is the aspartate 85.

The protein belongs to the Maf family. YhdE subfamily. The cofactor is a divalent metal cation.

It localises to the cytoplasm. It carries out the reaction dTTP + H2O = dTMP + diphosphate + H(+). It catalyses the reaction UTP + H2O = UMP + diphosphate + H(+). Nucleoside triphosphate pyrophosphatase that hydrolyzes dTTP and UTP. May have a dual role in cell division arrest and in preventing the incorporation of modified nucleotides into cellular nucleic acids. This Psychrobacter cryohalolentis (strain ATCC BAA-1226 / DSM 17306 / VKM B-2378 / K5) protein is dTTP/UTP pyrophosphatase.